A 140-amino-acid polypeptide reads, in one-letter code: Large ribosomal subunit protein uL3 (140 aa).

The protein belongs to the universal ribosomal protein uL3 family. Part of the 50S ribosomal subunit. Forms a cluster with proteins L14 and L19.

One of the primary rRNA binding proteins, it binds directly near the 3'-end of the 23S rRNA, where it nucleates assembly of the 50S subunit. The protein is Large ribosomal subunit protein uL3 (rplC) of Planobispora rosea.